We begin with the raw amino-acid sequence, 513 residues long: t-SNARE domain-containing protein 1 (513 aa).

2 disordered regions span residues Met1–Arg23 and Glu49–Phe128. Positions Ala7–Gly19 are enriched in gly residues. At Ser378 the chain carries Phosphoserine. A t-SNARE coiled-coil homology domain is found at Leu416 to Ala478. Residues Cys491–Val511 form a helical membrane-spanning segment.

Its subcellular location is the membrane. This is t-SNARE domain-containing protein 1 (TSNARE1) from Homo sapiens (Human).